The sequence spans 156 residues: CASP-like protein 5C1 (156 aa).

Residues 1-24 are Cytoplasmic-facing; it reads MENRERAGAGAVGSAGSLGLRVEQ. The chain crosses the membrane as a helical span at residues 25-45; sequence AVFSSASLLFMSVGVEFFSYT. A topological domain (extracellular) is located at residue alanine 46. Residues 47 to 67 form a helical membrane-spanning segment; it reads FCFLVTIMGLVIPWSCTLAMI. The Cytoplasmic portion of the chain corresponds to 68-81; that stretch reads DVYSILVGCPLRVP. A helical transmembrane segment spans residues 82–102; that stretch reads GVMVIVVIGDWVLAILSLAAA. The Extracellular segment spans residues 103-132; that stretch reads SSSAAVIDLLLQFHGSHCSPRFCGRYQLSA. A helical membrane pass occupies residues 133 to 153; sequence MMAFLSWFLTAASSLFNLWFI. The Cytoplasmic segment spans residues 154–156; it reads ASR.

Belongs to the Casparian strip membrane proteins (CASP) family. In terms of assembly, homodimer and heterodimers.

The protein resides in the cell membrane. In Oryza sativa subsp. indica (Rice), this protein is CASP-like protein 5C1.